Here is a 176-residue protein sequence, read N- to C-terminus: Shikimate kinase (176 aa).

14 to 19 serves as a coordination point for ATP; that stretch reads GAGKST. Serine 18 is a Mg(2+) binding site. Substrate contacts are provided by aspartate 36, arginine 60, and glycine 83. Arginine 121 is an ATP binding site. Arginine 140 lines the substrate pocket.

The protein belongs to the shikimate kinase family. As to quaternary structure, monomer. Requires Mg(2+) as cofactor.

The protein resides in the cytoplasm. It carries out the reaction shikimate + ATP = 3-phosphoshikimate + ADP + H(+). Its pathway is metabolic intermediate biosynthesis; chorismate biosynthesis; chorismate from D-erythrose 4-phosphate and phosphoenolpyruvate: step 5/7. Functionally, catalyzes the specific phosphorylation of the 3-hydroxyl group of shikimic acid using ATP as a cosubstrate. The polypeptide is Shikimate kinase (Francisella tularensis subsp. holarctica (strain FTNF002-00 / FTA)).